We begin with the raw amino-acid sequence, 654 residues long: MKLSLVAAMLLLLSAARAEEEDKKEDVGTVVGIDLGTTYSCVGVFKNGRVEIIANDQGNRITPPYVAFTPEGERLIGDAAKNQLTSNPENTVFDAKRLIGRTWNDPSVQQDIKFLPFKVVEKKTKPYIQVDIGGGQTKTFAPEEISAMVLTKMKETAEAYLGKKVTHAVVTVPAYFNDAQRQATKDAGTIAGLNVMRIINEPTAAAIAYGLDKREGEKNILVFDLGGGTFDVSLLTIDNGVFEVVATNGDTHLGGEDFDQRVMEHFIKLYKKKTGKDVRKDNRAVQKLRREVEKAKRALSSQHQARIEIESFYEGEDFSETLTRAKFEELNMDLFRSTMKPVQKVLEDSDLKKSDIDEIVLVGGSTRIPKIQQLVKEFFNGKEPSRGINPDEAVAYGAAVQAGVLSGDQDTGDLALLDVCPLTLGIETVGGVMTKLIPRNTVVPTKKSQIFSTASDNQPTVTIKVYEGERPLTKDNHLLGTFDLTGIPPAPRGVPQIEVTFEIDVNGILRVTAEDKGTGNKNKITITNDQNRLTPEEIERMVNDAEKFAEEDKKLKERIDTRNELESYAYSLKNQIGDKEKLGGKLSSEDKETMEKAVEEKIEWLESHQDADIEDFKAKKKELEEIVQPIISKLYGSAGPPPTGEEDTAEKDEL.

An N-terminal signal peptide occupies residues 1 to 18; that stretch reads MKLSLVAAMLLLLSAARA. Residues 1 to 80 form a required for interaction with ELAPOR1 region; sequence MKLSLVAAML…EGERLIGDAA (80 aa). An ATP-binding site is contributed by 36-39; the sequence is GTTY. Serine 86 is modified (phosphoserine). ATP is bound at residue lysine 96. Lysine 125 carries the N6-acetyllysine modification. Residues 125–280 are nucleotide-binding (NBD); the sequence is KPYIQVDIGG…KKKTGKDVRK (156 aa). Tyrosine 160 bears the 3'-nitrotyrosine mark. Residue lysine 213 is modified to N6-acetyllysine. Residue 227 to 229 participates in ATP binding; the sequence is GGT. Lysine 271 carries the post-translational modification N6-acetyllysine. 293–300 lines the ATP pocket; sequence EKAKRALS. N6-acetyllysine is present on lysine 326. Residue lysine 352 forms a Glycyl lysine isopeptide (Lys-Gly) (interchain with G-Cter in SUMO2) linkage. N6-acetyllysine; alternate is present on lysine 353. Lysine 353 participates in a covalent cross-link: Glycyl lysine isopeptide (Lys-Gly) (interchain with G-Cter in SUMO1); alternate. 364 to 367 is a binding site for ATP; it reads GSTR. Residues 409 to 419 are interdomain linker; the sequence is QDTGDLALLDV. A substrate-binding (SBD) region spans residues 420-500; sequence CPLTLGIETV…PRGVPQIEVT (81 aa). N6-succinyllysine is present on lysine 447. Arginine 492 is modified (omega-N-methylarginine). O-AMP-threonine; alternate is present on threonine 518. A Phosphothreonine; alternate modification is found at threonine 518. Position 585 is an N6,N6,N6-trimethyllysine; by METTL21A; in vitro (lysine 585). An N6,N6-dimethyllysine; alternate modification is found at lysine 585. The residue at position 585 (lysine 585) is an N6-methyllysine; alternate. At lysine 591 the chain carries N6-methyllysine. The interval 633–654 is disordered; sequence KLYGSAGPPPTGEEDTAEKDEL. Residues threonine 643 and threonine 648 each carry the phosphothreonine modification. Residues 644–654 show a composition bias toward acidic residues; that stretch reads GEEDTAEKDEL. The short motif at 651 to 654 is the Prevents secretion from ER element; sequence KDEL.

The protein belongs to the heat shock protein 70 family. Monomer and homooligomer; homooligomerization via the interdomain linker inactivates the chaperone activity and acts as a storage of HSPA5/BiP molecules. Interacts with DNAJC1 (via J domain). Component of an EIF2 complex at least composed of CELF1/CUGBP1, CALR, CALR3, EIF2S1, EIF2S2, HSP90B1 and HSPA5. Part of a large chaperone multiprotein complex comprising DNAJB11, HSP90B1, HSPA5, HYOU, PDIA2, PDIA4, PDIA6, PPIB, SDF2L1, UGGT1 and very small amounts of ERP29, but not, or at very low levels, CALR nor CANX. Interacts with TMEM132A and TRIM21. May form a complex with ERLEC1, OS9, SEL1L and SYVN1. Interacts with DNAJC10. Interacts with DNAJB9/ERdj4; leading to recruit HSPA5/BiP to ERN1/IRE1. Interacts with ERN1/IRE1 (via luminal domain); the interaction takes place following interaction with DNAJB9/ERdj4 and leads to inactivate ERN1/IRE1, the interaction also competitively inhibits ERN1 interaction with MANF. Interacts directly with MANF (via SAP domain); the interaction inhibits ATP binding to HSPA5/BiP and subsequent nucleotide exchange. Interacts with EIF2AK3/PERK (via luminal domain); interaction leads to inactivate EIF2AK3/PERK. Interacts with MX1. Interacts with METTL23. Interacts with CEMIP; the interaction induces calcium leakage from the endoplasmic reticulum and cell migration. Interacts with PCSK4 form; the interaction takes place in the endoplasmic reticulum. Interacts with CIPC. Interacts with CCDC88B (via C-terminus); the interaction opposes ERN1-mediated JNK activation, protecting against apoptosis. Interacts with INPP5K; necessary for INPP5K localization at the endoplasmic reticulum. Interacts with MANF; the interaction is direct. Interacts with LOXL2; leading to activate the ERN1/IRE1-XBP1 pathway of the unfolded protein response. Interacts with CLU under stressed condition; interaction increases CLU protein stability; facilitates its retrotranslocation and redistribution to the mitochondria; cooperatively suppress stress-induced apoptosis by stabilizing mitochondrial membrane integrity. Interacts with CCDC47. Interacts with CLN3. Interacts with ELAPOR1; may regulate the function of HSPA5 in apoptosis and cell proliferation. Interacts with CASP7. Interacts with ILDR2; the interaction stabilizes ILDR2 expression. Interacts with ADAM7. In terms of processing, in unstressed cells, AMPylation at Thr-518 by FICD inactivates the chaperome activity: AMPylated form is locked in a relatively inert state and only weakly stimulated by J domain-containing proteins. In response to endoplasmic reticulum stress, de-AMPylation by the same protein, FICD, restores the chaperone activity.

Its subcellular location is the endoplasmic reticulum lumen. The protein resides in the melanosome. It is found in the cytoplasm. The protein localises to the cell surface. The enzyme catalyses ATP + H2O = ADP + phosphate + H(+). With respect to regulation, the chaperone activity is regulated by ATP-induced allosteric coupling of the nucleotide-binding (NBD) and substrate-binding (SBD) domains. In the ADP-bound and nucleotide-free (apo) states, the two domains have little interaction. In contrast, in the ATP-bound state the two domains are tightly coupled, which results in drastically accelerated kinetics in both binding and release of polypeptide substrates. J domain-containing co-chaperones (DNAJB9/ERdj4 or DNAJC10/ERdj5) stimulate the ATPase activity and are required for efficient substrate recognition by HSPA5/BiP. Homooligomerization inactivates participating HSPA5/BiP protomers and probably act as reservoirs to store HSPA5/BiP molecules when they are not needed by the cell. In terms of biological role, endoplasmic reticulum chaperone that plays a key role in protein folding and quality control in the endoplasmic reticulum lumen. Involved in the correct folding of proteins and degradation of misfolded proteins via its interaction with DNAJC10/ERdj5, probably to facilitate the release of DNAJC10/ERdj5 from its substrate. Acts as a key repressor of the EIF2AK3/PERK and ERN1/IRE1-mediated unfolded protein response (UPR). In the unstressed endoplasmic reticulum, recruited by DNAJB9/ERdj4 to the luminal region of ERN1/IRE1, leading to disrupt the dimerization of ERN1/IRE1, thereby inactivating ERN1/IRE1. Also binds and inactivates EIF2AK3/PERK in unstressed cells. Accumulation of misfolded protein in the endoplasmic reticulum causes release of HSPA5/BiP from ERN1/IRE1 and EIF2AK3/PERK, allowing their homodimerization and subsequent activation. Plays an auxiliary role in post-translational transport of small presecretory proteins across endoplasmic reticulum (ER). May function as an allosteric modulator for SEC61 channel-forming translocon complex, likely cooperating with SEC62 to enable the productive insertion of these precursors into SEC61 channel. Appears to specifically regulate translocation of precursors having inhibitory residues in their mature region that weaken channel gating. May also play a role in apoptosis and cell proliferation. This chain is Endoplasmic reticulum chaperone BiP, found in Pongo abelii (Sumatran orangutan).